The primary structure comprises 148 residues: Lipoprotein signal peptidase (148 aa).

The next 2 membrane-spanning stretches (helical) occupy residues 57–77 (VLLVLVTLLIMIGVIYYFIKY) and 88–105 (VSFIVSGALGNLYDRIFY). Catalysis depends on residues Asp-110 and Asp-129. Residues 124-144 (TFNIADILVVVGTIMLAIFLL) form a helical membrane-spanning segment.

It belongs to the peptidase A8 family.

It is found in the cell membrane. The catalysed reaction is Release of signal peptides from bacterial membrane prolipoproteins. Hydrolyzes -Xaa-Yaa-Zaa-|-(S,diacylglyceryl)Cys-, in which Xaa is hydrophobic (preferably Leu), and Yaa (Ala or Ser) and Zaa (Gly or Ala) have small, neutral side chains.. It participates in protein modification; lipoprotein biosynthesis (signal peptide cleavage). Its function is as follows. This protein specifically catalyzes the removal of signal peptides from prolipoproteins. The chain is Lipoprotein signal peptidase from Clostridium novyi (strain NT).